The primary structure comprises 359 residues: Magnesium transporter NIPA2 (359 aa).

Residues 1–9 are Extracellular-facing; it reads MSLGRGKYD. A helical transmembrane segment spans residues 10-30; the sequence is FYIGLGLAMTSSIFIGGSFIL. Residues 31 to 56 are Cytoplasmic-facing; it reads KKKGLLRLARKGSMRAGQGGHAYLKE. A helical membrane pass occupies residues 57–77; that stretch reads WLWWAGLLSMGAGEVANFAAY. A topological domain (extracellular) is located at residue A78. A helical membrane pass occupies residues 79–99; sequence FAPATLVTPLGALSVLVSAIL. The Cytoplasmic segment spans residues 100–107; sequence SSYFLNER. The chain crosses the membrane as a helical span at residues 108–128; sequence LNLHGKIGCLLSILGSTVMVI. Residues 129 to 149 are Extracellular-facing; it reads HAPKEEEIETLNEMSHKLGDP. A helical membrane pass occupies residues 150-170; sequence GFVVFATFVVIVALIFIFVVG. Residues 171 to 175 lie on the Cytoplasmic side of the membrane; sequence PRHGQ. Residues 176–196 form a helical membrane-spanning segment; sequence TNILVYITICSVIGAFSVSCV. At 197-215 the chain is on the extracellular side; sequence KGLGIAIKELLAGKPVLQH. The helical transmembrane segment at 216–236 threads the bilayer; that stretch reads PLAWILLFSLVVCVSTQINYL. Topologically, residues 237–246 are cytoplasmic; sequence NRALDIFNTS. Residues 247 to 267 form a helical membrane-spanning segment; sequence IVTPIYYVFFTTSVLTCSAIL. Topologically, residues 268-278 are extracellular; the sequence is FKEWQDMPVDD. The chain crosses the membrane as a helical span at residues 279–299; that stretch reads VIGTLSGFFTIIVGIFLLHAF. Residues 300-359 are Cytoplasmic-facing; it reads KDVSFSLASLPVSFRKDEKAMNGNLSSMYEVLNNNEDDLPCGIEHTGENISRRNGNLPSF.

It belongs to the NIPA family. As to expression, widely expressed. Expressed at high levels in the kidney.

The protein localises to the cell membrane. It localises to the early endosome. It carries out the reaction Mg(2+)(in) = Mg(2+)(out). In terms of biological role, acts as a selective Mg(2+) transporter. The polypeptide is Magnesium transporter NIPA2 (Nipa2) (Mus musculus (Mouse)).